A 793-amino-acid chain; its full sequence is Netrin-B (793 aa).

An N-terminal signal peptide occupies residues 1-22 (MVRATGTRMGLLLPIILALAIG). A Laminin N-terminal domain is found at 39-303 (KPRKCLPSFV…NLQDNDSADA (265 aa)). 3 N-linked (GlcNAc...) asparagine glycosylation sites follow: asparagine 103, asparagine 125, and asparagine 298. Residues 332 to 378 (SVVKRQGKHKGSAYEKHYQSKLAATTPPQQPPKVTPPGKVTPPSTAA) form a disordered region. Positions 367–378 (PPGKVTPPSTAA) are enriched in low complexity. 15 cysteine pairs are disulfide-bonded: cysteine 405-cysteine 414, cysteine 407-cysteine 461, cysteine 463-cysteine 472, cysteine 475-cysteine 495, cysteine 498-cysteine 507, cysteine 500-cysteine 525, cysteine 528-cysteine 537, cysteine 540-cysteine 558, cysteine 561-cysteine 573, cysteine 563-cysteine 580, cysteine 582-cysteine 591, cysteine 594-cysteine 608, cysteine 649-cysteine 738, cysteine 652-cysteine 740, and cysteine 665-cysteine 792. Laminin EGF-like domains follow at residues 405 to 497 (CKCN…ECKM), 498 to 560 (CQCN…VCKR), and 561 to 610 (CDCH…PCIK). The disordered stretch occupies residues 420-446 (SGSGTALSDQDDGQDEDTPSAPSLANH). The span at 428 to 437 (DQDDGQDEDT) shows a compositional bias: acidic residues. The 144-residue stretch at 649-792 (CGKCKASPKK…KRFQRRARKC (144 aa)) folds into the NTR domain. Asparagine 746 carries an N-linked (GlcNAc...) asparagine glycan.

As to quaternary structure, binds to unc-5 and fra receptors. In terms of tissue distribution, at 24 hr after puparium formation (APF), detected in the most anterior (oldest) L3, L4 and L5 lamina neurons (at protein level). At 48 hr APF, expressed in all L3, L4 and L5 neurons with slightly higher expression in the L3 neurons (at protein level). At the midline of developing CNS and in different subsets of neurons, muscles, and epidermal patches.

The protein localises to the secreted. It is found in the extracellular space. The protein resides in the extracellular matrix. Its subcellular location is the cytoplasm. It localises to the perinuclear region. In terms of biological role, netrins control guidance of CNS commissural axons and peripheral motor axons. Its association with either fra or unc-5 receptors will lead to axon attraction or repulsion, respectively. While short-range repulsion requires both fra and unc-5 receptors, long-range repulsion only requires unc-5. This is Netrin-B (NetB) from Drosophila melanogaster (Fruit fly).